The sequence spans 475 residues: E3 ubiquitin-protein ligase TRIM62 (475 aa).

The segment at 11-54 (CSICLSIYQDPVSLGCEHYFCRRCITEHWVRQEAQGARDCPECR) adopts an RING-type zinc-finger fold. A B box-type zinc finger spans residues 88-128 (RAARPCQAHDKVKLFCLTDRALLCFFCDEPALHEQHQVTGI). Residues C93, H96, C114, and H120 each coordinate Zn(2+). Residues 127 to 241 (GIDDAFDELQ…LQERLAETDR (115 aa)) are a coiled coil. Residues 277–475 (PLQYTIWKSL…QPLRINTVRI (199 aa)) enclose the B30.2/SPRY domain.

Belongs to the TRIM/RBCC family. As to quaternary structure, interacts with the ubiquitin-conjugating enzyme, UBE2D2. Polyubiquitinated, autoubiquitinated in the presence of UBE2D2.

Its subcellular location is the cytoplasm. The enzyme catalyses S-ubiquitinyl-[E2 ubiquitin-conjugating enzyme]-L-cysteine + [acceptor protein]-L-lysine = [E2 ubiquitin-conjugating enzyme]-L-cysteine + N(6)-ubiquitinyl-[acceptor protein]-L-lysine.. It functions in the pathway protein modification; protein ubiquitination. E3 ubiquitin ligase that plays a role in antifungal immunity by mediating 'Lys-27'-linked ubiquitination of CARD9 downstream of C-type lectin receptors; leading to CARD9 activation, followed by activation of NF-kappa-B and MAP kinase p38 pathways. E3 ubiquitin ligase activity is dependent on E2 ubiquitin-conjugating enzyme UBE2D2. This is E3 ubiquitin-protein ligase TRIM62 from Homo sapiens (Human).